The sequence spans 93 residues: Large ribosomal subunit protein bL31B (93 aa).

Belongs to the bacterial ribosomal protein bL31 family. Type B subfamily. Part of the 50S ribosomal subunit.

This is Large ribosomal subunit protein bL31B from Pseudomonas syringae pv. tomato (strain ATCC BAA-871 / DC3000).